The sequence spans 294 residues: Uracil-DNA glycosylase (294 aa).

Asp-139 (proton acceptor) is an active-site residue.

It belongs to the uracil-DNA glycosylase (UDG) superfamily. UNG family.

The protein resides in the host nucleus. It catalyses the reaction Hydrolyzes single-stranded DNA or mismatched double-stranded DNA and polynucleotides, releasing free uracil.. Excises uracil residues from the DNA which can arise as a result of misincorporation of dUMP residues by DNA polymerase or deamination of cytosines. Therefore may reduce deleterious uracil incorporation into the viral genome, particularly in terminally differentiated cells which lack DNA repair enzymes. This chain is Uracil-DNA glycosylase (UL2), found in Human herpesvirus 2 (strain 333) (HHV-2).